Consider the following 195-residue polypeptide: Putative manganese efflux pump MntP (195 aa).

Transmembrane regions (helical) follow at residues 3-23 (LSAT…ASVG), 40-60 (GLIF…LGLL), 68-88 (WDHW…VLAG), 106-126 (VLIA…VGLA), 132-152 (ILHA…IGML), and 165-185 (AEII…YSHI).

It belongs to the MntP (TC 9.B.29) family.

It localises to the cell inner membrane. Probably functions as a manganese efflux pump. The polypeptide is Putative manganese efflux pump MntP (Sodalis glossinidius (strain morsitans)).